The chain runs to 364 residues: UDP-N-acetylglucosamine--N-acetylmuramyl-(pentapeptide) pyrophosphoryl-undecaprenol N-acetylglucosamine transferase 1 (364 aa).

UDP-N-acetyl-alpha-D-glucosamine contacts are provided by residues Thr10–Gly12, Asn124, Ser195, Ile250, and Gln295.

It belongs to the glycosyltransferase 28 family. MurG subfamily.

The protein localises to the cell membrane. It carries out the reaction di-trans,octa-cis-undecaprenyl diphospho-N-acetyl-alpha-D-muramoyl-L-alanyl-D-glutamyl-meso-2,6-diaminopimeloyl-D-alanyl-D-alanine + UDP-N-acetyl-alpha-D-glucosamine = di-trans,octa-cis-undecaprenyl diphospho-[N-acetyl-alpha-D-glucosaminyl-(1-&gt;4)]-N-acetyl-alpha-D-muramoyl-L-alanyl-D-glutamyl-meso-2,6-diaminopimeloyl-D-alanyl-D-alanine + UDP + H(+). The protein operates within cell wall biogenesis; peptidoglycan biosynthesis. Functionally, cell wall formation. Catalyzes the transfer of a GlcNAc subunit on undecaprenyl-pyrophosphoryl-MurNAc-pentapeptide (lipid intermediate I) to form undecaprenyl-pyrophosphoryl-MurNAc-(pentapeptide)GlcNAc (lipid intermediate II). This Bacillus cereus (strain ATCC 10987 / NRS 248) protein is UDP-N-acetylglucosamine--N-acetylmuramyl-(pentapeptide) pyrophosphoryl-undecaprenol N-acetylglucosamine transferase 1.